A 223-amino-acid chain; its full sequence is AMSH-like ubiquitin thioesterase 2 (223 aa).

The 129-residue stretch at 49-177 folds into the MPN domain; sequence VHISERLLED…YGIFKLTDPG (129 aa). 7 residues coordinate Zn(2+): histidine 127, histidine 129, aspartate 140, histidine 142, cysteine 185, histidine 191, and histidine 193. The JAMM motif signature appears at 127–140; the sequence is HTHPSQGCFMSSVD.

The protein belongs to the peptidase M67C family. It depends on Zn(2+) as a cofactor.

Its function is as follows. Zinc metalloprotease that cleaves 'Lys-48'- and 'Lys-63'-linked polyubiquitin chains. The chain is AMSH-like ubiquitin thioesterase 2 (AMSH2) from Arabidopsis thaliana (Mouse-ear cress).